Reading from the N-terminus, the 369-residue chain is P2X receptor B (369 aa).

At 1-25 (MTIDWDSILSYNTIKVVRIRDRRLG) the chain is on the cytoplasmic side. The helical transmembrane segment at 26 to 46 (ILHLCFLIVIVLYVVVYSAII) threads the bilayer. At 47 to 369 (KKGYVTTEEP…DKLYHNIEAL (323 aa)) the chain is on the lumenal side. A pore-forming motif region spans residues 283-296 (RHAIRLIFIQTGVI).

Belongs to the P2X receptor family.

It localises to the contractile vacuole membrane. Functionally, P2X receptors are ATP-gated ion channels that play a role in intracellular calcium signaling. Not required for the purinergic response to extracellular nucleotides. Not essential for osmoregulation. Inward currents are evoked by intracellular ATP and ATP analogs. Insensitive to the P2 receptor antagonists PPADS and suramin, and also copper ions. Inhibited by sodium ions. Permeable to chloride ions. The protein is P2X receptor B (p2xB) of Dictyostelium discoideum (Social amoeba).